We begin with the raw amino-acid sequence, 287 residues long: Acetyl-coenzyme A carboxylase carboxyl transferase subunit beta (287 aa).

One can recognise a CoA carboxyltransferase N-terminal domain in the interval leucine 28–alanine 287. Positions 32, 35, 51, and 54 each coordinate Zn(2+). Residues cysteine 32–cysteine 54 form a C4-type zinc finger.

The protein belongs to the AccD/PCCB family. As to quaternary structure, acetyl-CoA carboxylase is a heterohexamer composed of biotin carboxyl carrier protein (AccB), biotin carboxylase (AccC) and two subunits each of ACCase subunit alpha (AccA) and ACCase subunit beta (AccD). Requires Zn(2+) as cofactor.

The protein resides in the cytoplasm. It carries out the reaction N(6)-carboxybiotinyl-L-lysyl-[protein] + acetyl-CoA = N(6)-biotinyl-L-lysyl-[protein] + malonyl-CoA. Its pathway is lipid metabolism; malonyl-CoA biosynthesis; malonyl-CoA from acetyl-CoA: step 1/1. Functionally, component of the acetyl coenzyme A carboxylase (ACC) complex. Biotin carboxylase (BC) catalyzes the carboxylation of biotin on its carrier protein (BCCP) and then the CO(2) group is transferred by the transcarboxylase to acetyl-CoA to form malonyl-CoA. The sequence is that of Acetyl-coenzyme A carboxylase carboxyl transferase subunit beta from Marinomonas sp. (strain MWYL1).